A 468-amino-acid polypeptide reads, in one-letter code: Glutamate--tRNA ligase 2 (468 aa).

A 'HIGH' region motif is present at residues 9–19 (PSPTGHLHIGG). Residues C98, C100, C125, and H127 each coordinate Zn(2+). Residues 236-240 (RLSKR) carry the 'KMSKS' region motif. An ATP-binding site is contributed by K239.

It belongs to the class-I aminoacyl-tRNA synthetase family. Glutamate--tRNA ligase type 1 subfamily. As to quaternary structure, monomer. Zn(2+) is required as a cofactor.

The protein localises to the cytoplasm. The catalysed reaction is tRNA(Glu) + L-glutamate + ATP = L-glutamyl-tRNA(Glu) + AMP + diphosphate. Functionally, catalyzes the attachment of glutamate to tRNA(Glu) in a two-step reaction: glutamate is first activated by ATP to form Glu-AMP and then transferred to the acceptor end of tRNA(Glu). The chain is Glutamate--tRNA ligase 2 from Methylococcus capsulatus (strain ATCC 33009 / NCIMB 11132 / Bath).